A 21-amino-acid chain; its full sequence is MEWYPEAAANAERYTQIVWYK.

The protein belongs to the CRISP family. Post-translationally, contains 8 disulfide bonds. As to expression, expressed by the salivary gland.

It is found in the secreted. In terms of biological role, helicopsin exhibits robust neurotoxic activity as shown by immediate death (about 8 minutes) of mice due to respiratory paralysis. This Helicops angulatus (South American water snake) protein is Helicopsin.